The following is a 127-amino-acid chain: Putative lipoprotein LprJ (127 aa).

The signal sequence occupies residues 1-34 (MTAHTHDGTRTWRTGRQATTLLALLAGVFGGAAS). A lipid anchor (N-palmitoyl cysteine) is attached at cysteine 35. A lipid anchor (S-diacylglycerol cysteine) is attached at cysteine 35. The Extracellular portion of the chain corresponds to 35–99 (CAAPIQADMM…MAEINGMSRD (65 aa)). Residues 100–120 (MASTFTIVAIGTYCPAVIAPL) traverse the membrane as a helical segment. Over 121 to 127 (MPNRLQA) the chain is Cytoplasmic.

In terms of assembly, may interact with sensor protein KdpD. In terms of processing, modified by Lgt on Cys-35 with an S-linked diacylglycerol, signal peptide is removed by LspA, modified by Lnt with amide-linked fatty acid.

It localises to the cell membrane. Overexpression induces expression of sensor protein kdpD gene at low K(+) concentrations (0 and 250 uM, tested in M.smegatis). This chain is Putative lipoprotein LprJ (lprJ), found in Mycobacterium tuberculosis (strain ATCC 25618 / H37Rv).